We begin with the raw amino-acid sequence, 284 residues long: TM2 domain-containing protein almondex (284 aa).

An N-terminal signal peptide occupies residues 1-32; that stretch reads MRLQRQCIVVNMRSAIVLIMIFVLTGIRNSET. The interval 33 to 63 is disordered; the sequence is ASGGNQMDLSDSKGDHKDNSNASNGNGNAND. Over 33–225 the chain is Extracellular; that stretch reads ASGGNQMDLS…NWTQGYRWST (193 aa). Basic and acidic residues predominate over residues 42–51; the sequence is SDSKGDHKDN. Over residues 52–63 the composition is skewed to low complexity; sequence SNASNGNGNAND. N-linked (GlcNAc...) asparagine glycans are attached at residues asparagine 53, asparagine 89, asparagine 141, asparagine 194, asparagine 206, and asparagine 216. A TM2 domain is found at 220 to 267; the sequence is GYRWSTALLISLTLGGFGADRFYLGHWQEGIGKLFSFGGLGVWTIIDV. The chain crosses the membrane as a helical span at residues 226 to 246; sequence ALLISLTLGGFGADRFYLGHW. Residues 247–249 are Cytoplasmic-facing; that stretch reads QEG. The chain crosses the membrane as a helical span at residues 250 to 270; sequence IGKLFSFGGLGVWTIIDVLLI. Topologically, residues 271–284 are extracellular; that stretch reads SMHYLGPADGSLYI.

This sequence belongs to the TM2 family. Expressed in female ovary, mainly in nurse cells (at protein level). Expressed in the brain at low levels (at protein level).

It localises to the membrane. The protein resides in the vesicle. In terms of biological role, positive regulator of Notch signaling during lateral inhibition and boundary formation. Interacts with Notch signaling at the membrane, at the level of gamma-secretase-mediated S3 cleavage. May regulate Notch signaling by regulating the subcellular localization of N/Notch in a context dependent manner. Maternal neurogenic factor involved in Notch signaling-dependent mesectodermal and neuroectodermal specification during early embryogenesis. Functions cooperatively with bisc/TM2D1 and amrt/TM2D2. Required for maintenance of neuronal function. Involved in imaginal specification of eyes and wings. The protein is TM2 domain-containing protein almondex of Drosophila melanogaster (Fruit fly).